We begin with the raw amino-acid sequence, 662 residues long: DNA ligase (662 aa).

Residues 32-36, 75-76, and E106 contribute to the NAD(+) site; these read DAEYD and SL. K108 functions as the N6-AMP-lysine intermediate in the catalytic mechanism. Positions 129, 164, 271, and 295 each coordinate NAD(+). 4 residues coordinate Zn(2+): C389, C392, C407, and C413. Residues 580–662 enclose the BRCT domain; that stretch reads SSNSVLNNKI…HKVISLGVFK (83 aa).

Belongs to the NAD-dependent DNA ligase family. LigA subfamily. Requires Mg(2+) as cofactor. Mn(2+) is required as a cofactor.

The enzyme catalyses NAD(+) + (deoxyribonucleotide)n-3'-hydroxyl + 5'-phospho-(deoxyribonucleotide)m = (deoxyribonucleotide)n+m + AMP + beta-nicotinamide D-nucleotide.. DNA ligase that catalyzes the formation of phosphodiester linkages between 5'-phosphoryl and 3'-hydroxyl groups in double-stranded DNA using NAD as a coenzyme and as the energy source for the reaction. It is essential for DNA replication and repair of damaged DNA. This Wolbachia pipientis wMel protein is DNA ligase.